The primary structure comprises 214 residues: uncharacterized protein (214 aa).

CBS domains are found at residues 7–65 and 69–129; these read MDKN…KKPI and MRPV…EIPV.

This is an uncharacterized protein from Methanocaldococcus jannaschii (strain ATCC 43067 / DSM 2661 / JAL-1 / JCM 10045 / NBRC 100440) (Methanococcus jannaschii).